The following is a 260-amino-acid chain: Thymidylate synthase (260 aa).

The protein operates within pyrimidine metabolism; dTTP biosynthesis. Its function is as follows. Is able to catalyze the biosynthesis of dTMP using dUMP, tetrahydrofolate and formaldehyde in vitro, i.e. a reaction equivalent to that catalyzed by bacterial thymidylate synthases (EC 2.1.1.45). However, M.jannaschii like most methanogenic Archaea lacks folates, thus the physiological cosubstrate is unknown but is likely one of the non-methylated methanopterin biosynthetic intermediates. This is Thymidylate synthase from Methanocaldococcus jannaschii (strain ATCC 43067 / DSM 2661 / JAL-1 / JCM 10045 / NBRC 100440) (Methanococcus jannaschii).